The sequence spans 172 residues: Putative B3 domain-containing protein At1g05615 (172 aa).

The TF-B3 DNA-binding region spans 69–169 (VDEGKIIDFE…NLAMVPLTPT (101 aa)).

The protein resides in the nucleus. In Arabidopsis thaliana (Mouse-ear cress), this protein is Putative B3 domain-containing protein At1g05615.